The following is a 164-amino-acid chain: 3-dehydroquinate dehydratase (164 aa).

Catalysis depends on tyrosine 22, which acts as the Proton acceptor. Residues asparagine 73, histidine 79, and aspartate 86 each contribute to the substrate site. Histidine 99 functions as the Proton donor in the catalytic mechanism. Substrate-binding positions include 100 to 101 and arginine 110; that span reads IS.

It belongs to the type-II 3-dehydroquinase family. Homododecamer.

The enzyme catalyses 3-dehydroquinate = 3-dehydroshikimate + H2O. The protein operates within metabolic intermediate biosynthesis; chorismate biosynthesis; chorismate from D-erythrose 4-phosphate and phosphoenolpyruvate: step 3/7. Functionally, catalyzes a trans-dehydration via an enolate intermediate. This chain is 3-dehydroquinate dehydratase, found in Aliarcobacter butzleri (strain RM4018) (Arcobacter butzleri).